Reading from the N-terminus, the 369-residue chain is Chorismate synthase (369 aa).

NADP(+) contacts are provided by Arg48 and Arg54. Residues 125–127 (RSS), 238–239 (NA), Gly278, 293–297 (KPTSS), and Arg319 contribute to the FMN site.

This sequence belongs to the chorismate synthase family. As to quaternary structure, homotetramer. FMNH2 serves as cofactor.

It catalyses the reaction 5-O-(1-carboxyvinyl)-3-phosphoshikimate = chorismate + phosphate. The protein operates within metabolic intermediate biosynthesis; chorismate biosynthesis; chorismate from D-erythrose 4-phosphate and phosphoenolpyruvate: step 7/7. Catalyzes the anti-1,4-elimination of the C-3 phosphate and the C-6 proR hydrogen from 5-enolpyruvylshikimate-3-phosphate (EPSP) to yield chorismate, which is the branch point compound that serves as the starting substrate for the three terminal pathways of aromatic amino acid biosynthesis. This reaction introduces a second double bond into the aromatic ring system. This Burkholderia pseudomallei (strain 1106a) protein is Chorismate synthase.